The primary structure comprises 57 residues: Large ribosomal subunit protein bL32A (57 aa).

This sequence belongs to the bacterial ribosomal protein bL32 family.

In Streptomyces coelicolor (strain ATCC BAA-471 / A3(2) / M145), this protein is Large ribosomal subunit protein bL32A (rpmF1).